The sequence spans 215 residues: SAGA complex/transcription factor TFIID complex subunit Taf10 (215 aa).

Positions 1–77 are disordered; the sequence is MSDINNNEPA…SRERHGSNYV (77 aa). Over residues 23-42 the composition is skewed to polar residues; the sequence is GNNSMSVDEQPETSSTNLPT. Residues 58–73 show a composition bias toward basic and acidic residues; it reads NNEDSPKSDDSRERHG. Residues 58–203 enclose the Histone-fold domain; it reads NNEDSPKSDD…VDDLSAALNE (146 aa).

This sequence belongs to the TAF10 family. As to quaternary structure, component of the 1.8 MDa SAGA (Spt-Ada-Gcn5 acetyltransferase) complex, which is composed of 19 subunits tra1, spt7, taf5, ngg1/ada3, sgf73, spt20, spt8, taf12, taf6, hfi1/ada1, ubp8, gcn5, ada2, spt3, sgf29, taf10, taf9, sgf11 and sus1. The SAGA complex is composed of 4 modules, namely the HAT (histone acetyltransferase) module (gcn5, ada2, ngg1/ada3 and sgf29), the DUB (deubiquitinating) module (ubp8, sgf11, sgf73 and sus1), the core or TAF (TBP-associated factor) module (taf5, taf6, taf9, taf10 and taf12), and the Tra1 or SPT (Suppressor of Ty) module (tra1, hfi1/ada1, spt3, spt7, spt8 and spt20). The Tra1/SPT module binds activators, the core module recruits TBP (TATA-binding protein), the HAT module contains the histone H3 acetyltransferase gcn5, and the DUB module comprises the histone H2B deubiquitinase ubp8. Component of the 1.2 MDa TFIID complex, which is composed of TATA-binding protein (TBP) and the 14 TBP-associated factors (TAFs). It comprises 1 copy of each taf1, taf2, taf3, taf7, taf8, taf11, taf13, 2 copies of each taf4, taf5, taf6, taf9, taf10, taf12, and 3 copies of taf14. In TFIID, taf10 heterodimerizes with taf3 and taf8.

The protein localises to the nucleus. Functionally, functions as a component of both the DNA-binding general transcription initiation factor complex TFIID and the transcription coactivator SAGA complex. Binding of TFIID to a promoter (with or without TATA element) is the initial step in pre-initiation complex (PIC) formation. TFIID plays a key role in the regulation of gene expression by RNA polymerase II through different activities such as transcription activator interaction, core promoter recognition and selectivity, TFIIA and TFIIB interaction, chromatin modification (histone acetylation by TAF1), facilitation of DNA opening and initiation of transcription. SAGA acts as a general cofactor required for essentially all RNA polymerase II transcription. At the promoters, SAGA is required for transcription pre-initiation complex (PIC) recruitment. It influences RNA polymerase II transcriptional activity through different activities such as TBP interaction (via core/TAF module) and promoter selectivity, interaction with transcription activators (via Tra1/SPT module), and chromatin modification through histone acetylation (via HAT module) and deubiquitination (via DUB module). SAGA preferentially acetylates histones H3 (to form H3K9ac, H3K14ac, H3K18ac and H3K23ac) and H2B and deubiquitinates histone H2B. SAGA interacts with DNA via upstream activating sequences (UASs). In Schizosaccharomyces pombe (strain 972 / ATCC 24843) (Fission yeast), this protein is SAGA complex/transcription factor TFIID complex subunit Taf10.